Reading from the N-terminus, the 63-residue chain is Large ribosomal subunit protein uL30 (63 aa).

The protein belongs to the universal ribosomal protein uL30 family. As to quaternary structure, part of the 50S ribosomal subunit.

This chain is Large ribosomal subunit protein uL30, found in Rickettsia massiliae (strain Mtu5).